The sequence spans 591 residues: Parathyroid hormone/parathyroid hormone-related peptide receptor (591 aa).

The N-terminal stretch at 1–26 is a signal peptide; that stretch reads MGAARIAPSLALLLCCPVLSSAYALV. Over 27–188 the chain is Extracellular; it reads DADDVFTKEE…REREVFDRLG (162 aa). Disulfide bonds link cysteine 48–cysteine 117, cysteine 108–cysteine 148, and cysteine 131–cysteine 170. The disordered stretch occupies residues 67 to 104; it reads KGWTPASTSGKPRKEKASGKFYPESKENKDVPTGSRRR. Residues 81–96 are compositionally biased toward basic and acidic residues; the sequence is EKASGKFYPESKENKD. Asparagine 151, asparagine 161, asparagine 166, and asparagine 176 each carry an N-linked (GlcNAc...) asparagine glycan. A helical membrane pass occupies residues 189–212; sequence MIYTVGYSMSLASLTVAVLILAYF. Residues 213–219 lie on the Cytoplasmic side of the membrane; sequence RRLHCTR. A helical membrane pass occupies residues 220-239; sequence NYIHMHMFLSFMLRAASIFV. Over 240 to 282 the chain is Extracellular; the sequence is KDAVLYSGFTLDEAERLTEEELHIIAQVPPPPAAAAVGYAGCR. Residues 283-306 traverse the membrane as a helical segment; sequence VAVTFFLYFLATNYYWILVEGLYL. The Cytoplasmic segment spans residues 307 to 320; sequence HSLIFMAFFSEKKY. Residues 321–342 traverse the membrane as a helical segment; it reads LWGFTIFGWGLPAVFVAVWVGV. Topologically, residues 343–361 are extracellular; sequence RATLANTGCWDLSSGHKKW. A helical membrane pass occupies residues 362 to 382; it reads IIQVPILASVVLNFILFINII. At 383 to 409 the chain is on the cytoplasmic side; sequence RVLATKLRETNAGRCDTRQQYRKLLRS. A helical transmembrane segment spans residues 410-428; the sequence is TLVLVPLFGVHYTVFMALP. Topologically, residues 429 to 440 are extracellular; sequence YTEVSGTLWQIQ. Residues 441–463 form a helical membrane-spanning segment; that stretch reads MHYEMLFNSFQGFFVAIIYCFCN. The Cytoplasmic portion of the chain corresponds to 464 to 591; that stretch reads GEVQAEIRKS…LLQEEWETVM (128 aa). The Important for interaction with G proteins signature appears at 474–477; the sequence is WSRW. The tract at residues 516-544 is disordered; sequence LPLSPRLPPATTNGHSQLPGHAKPGAPAT.

The protein belongs to the G-protein coupled receptor 2 family. As to quaternary structure, homodimer in the absence of bound ligand. Peptide hormone binding leads to dissociation of the homodimer. In terms of processing, N-glycosylated.

It localises to the cell membrane. Its function is as follows. G-protein-coupled receptor for parathyroid hormone (PTH) and for parathyroid hormone-related peptide (PTHLH). Ligand binding causes a conformation change that triggers signaling via guanine nucleotide-binding proteins (G proteins) and modulates the activity of downstream effectors, such as adenylate cyclase (cAMP). PTH1R is coupled to G(s) G alpha proteins and mediates activation of adenylate cyclase activity. PTHLH dissociates from PTH1R more rapidly than PTH; as consequence, the cAMP response induced by PTHLH decays faster than the response induced by PTH. The sequence is that of Parathyroid hormone/parathyroid hormone-related peptide receptor (Pth1r) from Rattus norvegicus (Rat).